The sequence spans 607 residues: Isocitrate dehydrogenase kinase/phosphatase (607 aa).

Residues alanine 328–leucine 334 and lysine 349 contribute to the ATP site. Residue aspartate 384 is part of the active site.

Belongs to the AceK family.

Its subcellular location is the cytoplasm. The catalysed reaction is L-seryl-[isocitrate dehydrogenase] + ATP = O-phospho-L-seryl-[isocitrate dehydrogenase] + ADP + H(+). Its function is as follows. Bifunctional enzyme which can phosphorylate or dephosphorylate isocitrate dehydrogenase (IDH) on a specific serine residue. This is a regulatory mechanism which enables bacteria to bypass the Krebs cycle via the glyoxylate shunt in response to the source of carbon. When bacteria are grown on glucose, IDH is fully active and unphosphorylated, but when grown on acetate or ethanol, the activity of IDH declines drastically concomitant with its phosphorylation. In Cupriavidus metallidurans (strain ATCC 43123 / DSM 2839 / NBRC 102507 / CH34) (Ralstonia metallidurans), this protein is Isocitrate dehydrogenase kinase/phosphatase.